The sequence spans 207 residues: Outer-membrane lipoprotein carrier protein (207 aa).

A signal peptide spans 1–23 (MMKPHNLFQFLAVCSLTVAVASA).

This sequence belongs to the LolA family. In terms of assembly, monomer.

It is found in the periplasm. Its function is as follows. Participates in the translocation of lipoproteins from the inner membrane to the outer membrane. Only forms a complex with a lipoprotein if the residue after the N-terminal Cys is not an aspartate (The Asp acts as a targeting signal to indicate that the lipoprotein should stay in the inner membrane). The protein is Outer-membrane lipoprotein carrier protein of Neisseria gonorrhoeae (strain ATCC 700825 / FA 1090).